A 154-amino-acid polypeptide reads, in one-letter code: D-aminoacyl-tRNA deacylase (154 aa).

Residues 137-138 (GP) carry the Gly-cisPro motif, important for rejection of L-amino acids motif.

Belongs to the DTD family. As to quaternary structure, homodimer.

It localises to the cytoplasm. It carries out the reaction glycyl-tRNA(Ala) + H2O = tRNA(Ala) + glycine + H(+). The enzyme catalyses a D-aminoacyl-tRNA + H2O = a tRNA + a D-alpha-amino acid + H(+). An aminoacyl-tRNA editing enzyme that deacylates mischarged D-aminoacyl-tRNAs. Also deacylates mischarged glycyl-tRNA(Ala), protecting cells against glycine mischarging by AlaRS. Acts via tRNA-based rather than protein-based catalysis; rejects L-amino acids rather than detecting D-amino acids in the active site. By recycling D-aminoacyl-tRNA to D-amino acids and free tRNA molecules, this enzyme counteracts the toxicity associated with the formation of D-aminoacyl-tRNA entities in vivo and helps enforce protein L-homochirality. The sequence is that of D-aminoacyl-tRNA deacylase from Thermomicrobium roseum (strain ATCC 27502 / DSM 5159 / P-2).